We begin with the raw amino-acid sequence, 303 residues long: Glycine--tRNA ligase alpha subunit (303 aa).

The protein belongs to the class-II aminoacyl-tRNA synthetase family. As to quaternary structure, tetramer of two alpha and two beta subunits.

The protein resides in the cytoplasm. It carries out the reaction tRNA(Gly) + glycine + ATP = glycyl-tRNA(Gly) + AMP + diphosphate. The polypeptide is Glycine--tRNA ligase alpha subunit (Stenotrophomonas maltophilia (strain K279a)).